Here is a 1349-residue protein sequence, read N- to C-terminus: Protein strawberry notch homolog 2 (1349 aa).

Disordered regions lie at residues 170–212 (YQSH…QHPD), 609–633 (STRR…PKAS), and 1319–1349 (PTET…FPNS). Residues 177-188 (EEEEGEEEEETE) are compositionally biased toward acidic residues. The span at 609–631 (STRRRRDRGGGKRKRRPRGRGPK) shows a compositional bias: basic residues.

The protein belongs to the SBNO family. Interacts with TAL1; this interaction inhibits TAL1 occupancy of the DCSTAMP promoter, leading to the activation of the DCSTAMP promoter by the transcription factor MITF. Expressed in the spleen and bone marrow, and to a lesser extent in the kidney, liver, brain, skin, heart and muscle. Expressed predominantly in osteoclasts, and to a lesser extent in T-cells, B-cells and osteoblasts. Expressed in macrophages.

Functionally, acts as a transcriptional coregulator, that can have both coactivator and corepressor functions. Inhibits the DCSTAMP-repressive activity of TAL1, hence enhancing the access of the transcription factor MITF to the DC-STAMP promoter in osteoclast. Plays a role in bone homeostasis; required as a positive regulator in TNFSF11//RANKL-mediated osteoclast fusion via a DCSTAMP-dependent pathway. May also be required in the regulation of osteoblast differentiation. Involved in the transcriptional corepression of NF-kappaB in macrophages. Plays a role as a regulator in the pro-inflammatory cascade. The sequence is that of Protein strawberry notch homolog 2 (Sbno2) from Mus musculus (Mouse).